The primary structure comprises 308 residues: Mitochondrial import receptor subunit TOM40B (308 aa).

Residues 281 to 308 are required for mitochondrial targeting; it reads PLPVTLALGAFLNHWRNRFHCGFSITVG.

Belongs to the Tom40 family. In terms of assembly, forms part of the preprotein translocase of the outer mitochondrial membrane (TOM complex) containing TOMM22, TOMM40, TOMM40L and TOMM70. Interacts with mitochondrial targeting sequences. As to expression, widely expressed. Higher levels in heart, brain and liver, very low level in testis.

The protein resides in the mitochondrion outer membrane. In terms of biological role, potential channel-forming protein implicated in import of protein precursors into mitochondria. The sequence is that of Mitochondrial import receptor subunit TOM40B from Rattus norvegicus (Rat).